The following is a 53-amino-acid chain: MIKWIIILLIVAAAASLLGMPALAGAAATGARILIGIVLVIFLLVVLGIFAVT.

A run of 2 helical transmembrane segments spans residues 4–24 and 33–53; these read WIII…PALA and ILIG…FAVT.

Belongs to the UPF0391 family.

Its subcellular location is the cell membrane. The chain is UPF0391 membrane protein msr4317 from Mesorhizobium japonicum (strain LMG 29417 / CECT 9101 / MAFF 303099) (Mesorhizobium loti (strain MAFF 303099)).